A 566-amino-acid polypeptide reads, in one-letter code: Putative sensory transducer protein YvaQ (566 aa).

An N-terminal signal peptide occupies residues 1–31 (MRLTISRKFSLVFLTLILINLLVGGIGVLNM). A coiled-coil region spans residues 74–110 (DKSKMDTLDQEMNQIMEDINQKLDNYEKTISTDKEQK). Residues 186–206 (IYTALLVAASILISIFIWLYI) form a helical membrane-spanning segment. In terms of domain architecture, HAMP spans 208–261 (RNIVKPIIRMKESANHIAEGDLSNDMEALNSKDELGDLNEALQKMVGNLRDIVG). In terms of domain architecture, Methyl-accepting transducer spans 280-530 (ATNETRSGSK…ESAAGIEETF (251 aa)). Residues 536-566 (SAHSMDQVLLNAEELEQLANELNEKMGQFTI) are a coiled coil.

Belongs to the methyl-accepting chemotaxis (MCP) protein family.

Its subcellular location is the cell membrane. In terms of biological role, chemotactic-signal transducers respond to changes in the concentration of attractants and repellents in the environment, transduce a signal from the outside to the inside of the cell, and facilitate sensory adaptation through the variation of the level of methylation. Attractants increase the level of methylation while repellents decrease the level of methylation. The sequence is that of Putative sensory transducer protein YvaQ (yvaQ) from Bacillus subtilis (strain 168).